Reading from the N-terminus, the 172-residue chain is Photosystem I assembly protein Ycf3 (172 aa).

TPR repeat units follow at residues 35–68 (AFSY…EVDA), 72–105 (SYIL…NPSL), and 120–153 (GEQA…APTN).

The protein belongs to the Ycf3 family.

The protein resides in the plastid. It is found in the chloroplast thylakoid membrane. Essential for the assembly of the photosystem I (PSI) complex. May act as a chaperone-like factor to guide the assembly of the PSI subunits. The protein is Photosystem I assembly protein Ycf3 of Chlamydomonas reinhardtii (Chlamydomonas smithii).